We begin with the raw amino-acid sequence, 420 residues long: Pre-mRNA-splicing factor RBM22 (420 aa).

Residue Ala2 is modified to N-acetylalanine. Phosphoserine occurs at positions 4 and 102. Residues Lys139 and Lys149 each participate in a glycyl lysine isopeptide (Lys-Gly) (interchain with G-Cter in SUMO2) cross-link. The C3H1-type zinc-finger motif lies at 159–186 (RNRPHICSFWVKGECKRGEECPYRHEKP). The residue at position 212 (Lys212) is an N6-acetyllysine. The RRM domain occupies 232–305 (TTLYVGGLGD…RRLNVKWGRS (74 aa)). Residue Lys290 forms a Glycyl lysine isopeptide (Lys-Gly) (interchain with G-Cter in SUMO2) linkage. Disordered regions lie at residues 303–343 (GRSQ…AAEE) and 372–420 (APPP…HSSP). Over residues 309–318 (RGKEKEKDGT) the composition is skewed to basic and acidic residues.

Belongs to the SLT11 family. As to quaternary structure, component of the pre-catalytic and catalytic spliceosome complexes. Component of the postcatalytic spliceosome P complex. Interacts with PDCD6; the interaction induces translocation of PDCD6 in the cytoplasm. Interacts with PPIL1.

It localises to the nucleus. It is found in the cytoplasm. Functionally, required for pre-mRNA splicing as component of the activated spliceosome. Involved in the first step of pre-mRNA splicing. Binds directly to the internal stem-loop (ISL) domain of the U6 snRNA and to the pre-mRNA intron near the 5' splice site during the activation and catalytic phases of the spliceosome cycle. Involved in both translocations of the nuclear SLU7 to the cytoplasm and the cytosolic calcium-binding protein PDCD6 to the nucleus upon cellular stress responses. In Bos taurus (Bovine), this protein is Pre-mRNA-splicing factor RBM22 (RBM22).